Here is a 372-residue protein sequence, read N- to C-terminus: Glutamate 5-kinase (372 aa).

Lys14 is a binding site for ATP. Positions 54, 141, and 153 each coordinate substrate. 173 to 174 (TD) is a binding site for ATP. The 79-residue stretch at 280–358 (RGTLVLDDGA…DAIVGLLGYM (79 aa)) folds into the PUA domain.

This sequence belongs to the glutamate 5-kinase family.

It is found in the cytoplasm. The enzyme catalyses L-glutamate + ATP = L-glutamyl 5-phosphate + ADP. The protein operates within amino-acid biosynthesis; L-proline biosynthesis; L-glutamate 5-semialdehyde from L-glutamate: step 1/2. Functionally, catalyzes the transfer of a phosphate group to glutamate to form L-glutamate 5-phosphate. The polypeptide is Glutamate 5-kinase (Pseudomonas fluorescens (strain Pf0-1)).